A 304-amino-acid chain; its full sequence is Glycine--tRNA ligase alpha subunit (304 aa).

Belongs to the class-II aminoacyl-tRNA synthetase family. In terms of assembly, tetramer of two alpha and two beta subunits.

It is found in the cytoplasm. It carries out the reaction tRNA(Gly) + glycine + ATP = glycyl-tRNA(Gly) + AMP + diphosphate. In Yersinia pseudotuberculosis serotype O:1b (strain IP 31758), this protein is Glycine--tRNA ligase alpha subunit.